The chain runs to 559 residues: Terpene synthase 1 (559 aa).

Residues aspartate 312, aspartate 316, aspartate 456, and glutamate 464 each contribute to the Mg(2+) site. Positions 312–316 match the DDXXD motif motif; the sequence is DDLYD.

This sequence belongs to the terpene synthase family. Tpsa subfamily. It depends on Mg(2+) as a cofactor. Mn(2+) is required as a cofactor. As to expression, mostly expressed in stems and, to a lower extent, in leaves, roots and fruits.

The enzyme catalyses (2E,6E)-farnesyl diphosphate = (-)-(E)-beta-caryophyllene + diphosphate. It carries out the reaction (2E,6E)-farnesyl diphosphate = alpha-humulene + diphosphate. It participates in secondary metabolite biosynthesis; terpenoid biosynthesis. In terms of biological role, sesquiterpene synthase involved in the biosynthesis of volatile compounds that contribute to the characteristic flavors of black pepper. Mediates the conversion of (2E,6E)-farnesyl diphosphate (FPP) into beta-caryophyllene and, as a minor compound, into alpha-humulene. This chain is Terpene synthase 1, found in Piper nigrum (Black pepper).